A 649-amino-acid polypeptide reads, in one-letter code: ENTH domain-containing protein C19F8.03c (649 aa).

Positions serine 2–proline 136 constitute an ENTH domain. Disordered stretches follow at residues tyrosine 280 to glutamate 382, leucine 409 to serine 440, and phenylalanine 590 to serine 649. Phosphoserine occurs at positions 285 and 287. Over residues proline 299–proline 308 the composition is skewed to basic residues. Composition is skewed to polar residues over residues glutamate 313–glutamine 326 and proline 340–isoleucine 349. The span at glutamine 352–leucine 381 shows a compositional bias: acidic residues. Composition is skewed to polar residues over residues leucine 409–proline 418, threonine 614–serine 624, and alanine 635–serine 649. Threonine 414 carries the post-translational modification Phosphothreonine. The residue at position 417 (serine 417) is a Phosphoserine.

The protein localises to the cytoplasm. This Schizosaccharomyces pombe (strain 972 / ATCC 24843) (Fission yeast) protein is ENTH domain-containing protein C19F8.03c.